Here is a 59-residue protein sequence, read N- to C-terminus: MANITVKLVRSRYGNTPKQRATLASLGLKKIRQERSFEKTDTLVGMIAKVQHLVEVTES.

This sequence belongs to the universal ribosomal protein uL30 family. As to quaternary structure, part of the 50S ribosomal subunit.

In Solidesulfovibrio magneticus (strain ATCC 700980 / DSM 13731 / RS-1) (Desulfovibrio magneticus), this protein is Large ribosomal subunit protein uL30.